A 483-amino-acid polypeptide reads, in one-letter code: MIQVLLVTLCLAAFPYQGSSIILESGNVNDYEVLYPQKVTALPKGAVQPKYEDTMQYEFKVNGEPVVLHLEKNKGLFSKDYSETHYSSDGRKITTNPPVEDHCYYHGRIQNDADSTASISACNGLKGHFKLQGETYLIEPLKLSDSEAHAVYKYENVEKEDEAPKMCGVTQTNWESDEPIKKASQLNLTPEQQGFPQRYIELVVVADHRMFTKYNGNLNTIRIWVHELVNTMNVFYRPLNIRVSLTDLEVWSDQDLINVQPAAADTLEAFGDWRETVLLNRISHDNAQLLTAIELDGETIGLANRGTMCDPKLSTGIVQDHSAINLWVAVTMAHEMGHNLGISHDGNQCHCDANSCIMSEELREQLSFEFSDCSQNQYQTYLTDHNPQCMLNEPLRTDIVSTPVSGNELLETGEESDFDAPANPCCDAATCKLTTGSQCADGLCCDQCKFMKEGTVCRRARGDDLDDYCNGISAGCPRNPFHA.

The N-terminal stretch at 1-20 (MIQVLLVTLCLAAFPYQGSS) is a signal peptide. Residues 21–190 (IILESGNVND…KKASQLNLTP (170 aa)) constitute a propeptide that is removed on maturation. A Peptidase M12B domain is found at 198–394 (RYIELVVVAD…HNPQCMLNEP (197 aa)). Ca(2+)-binding residues include E201 and D285. Intrachain disulfides connect C309–C389, C349–C373, and C351–C356. H334 lines the Zn(2+) pocket. Residue E335 is part of the active site. H338 and H344 together coordinate Zn(2+). The Ca(2+) site is built by C389 and N392. Residues 395-418 (LRTDIVSTPVSGNELLETGEESDF) constitute a propeptide that is removed on maturation. Residues 402 to 483 (TPVSGNELLE…AGCPRNPFHA (82 aa)) form the Disintegrin domain. Intrachain disulfides connect C425–C448, C439–C445, C444–C469, and C457–C476. The short motif at 461-463 (RGD) is the Cell attachment site element.

Belongs to the venom metalloproteinase (M12B) family. P-II subfamily. P-IId sub-subfamily. As to quaternary structure, homodimer; disulfide-linked (disintegrin). The cofactor is Zn(2+). Expressed by the venom gland.

The protein resides in the secreted. In terms of biological role, impairs hemostasis in the envenomed animal. This protein has not been identified in the venom. Functionally, inhibits ADP-induced platelet aggregation. Binds and inhibits integrins GPIIb/GPIIIa (ITGA2B/ITGB3), alpha-5/beta-1 (ITGA5/ITGB1), alpha-V/beta-3 (ITGAV/ITGB3), and alpha-V/beta-5 (ITGAV/ITGB5). It blocks cancer cell adhesion (tested on human breast cancer cell line MDA-MB-435) to fibronectin and vitronectin and thus prevents invasion of cancer cells. This chain is Zinc metalloproteinase/disintegrin, found in Agkistrodon contortrix contortrix (Southern copperhead).